A 207-amino-acid chain; its full sequence is Nucleoplasmin-2 (207 aa).

Residues 1 to 15 (MSRHSTSSVTETTAK) are compositionally biased toward polar residues. Disordered stretches follow at residues 1–20 (MSRH…MLWG) and 121–207 (DLTW…VTKK). Residues 123 to 147 (TWEDDEEEEEEEEEEDEDEDADISL) show a composition bias toward acidic residues. The tract at residues 129-152 (EEEEEEEEEDEDEDADISLEEIPV) is acidic tract A2. The Bipartite nuclear localization signal motif lies at 165–180 (SIAKKKKVEKEEDETV). Positions 198 to 207 (PRAKKPVTKK) are enriched in basic residues.

This sequence belongs to the nucleoplasmin family. Homopentamer, when bound to H2A-H2B dimers only. Homodecamer of two stacked pentamers, when bound to H2A-H2B dimers and H3-H4 tetramers simultaneously. In terms of tissue distribution, ovary specific.

Its subcellular location is the nucleus. Its function is as follows. Core histones chaperone involved in chromatin reprogramming, specially during fertilization and early embryonic development. Probably involved in sperm DNA decondensation during fertilization. The sequence is that of Nucleoplasmin-2 (Npm2) from Mus musculus (Mouse).